The chain runs to 269 residues: 2-dehydro-3-deoxyphosphooctonate aldolase (269 aa).

The protein belongs to the KdsA family.

The protein resides in the cytoplasm. The catalysed reaction is D-arabinose 5-phosphate + phosphoenolpyruvate + H2O = 3-deoxy-alpha-D-manno-2-octulosonate-8-phosphate + phosphate. The protein operates within carbohydrate biosynthesis; 3-deoxy-D-manno-octulosonate biosynthesis; 3-deoxy-D-manno-octulosonate from D-ribulose 5-phosphate: step 2/3. It participates in bacterial outer membrane biogenesis; lipopolysaccharide biosynthesis. This chain is 2-dehydro-3-deoxyphosphooctonate aldolase, found in Chlamydia felis (strain Fe/C-56) (Chlamydophila felis).